The primary structure comprises 683 residues: Protein distal antenna (683 aa).

Residues 7 to 58 (TKGKRPLRSLTPRDKIHAIQRIHDGESKASVARDIGVPESTLRGWCKNEDKL) form the HTH psq-type domain. Positions 34-54 (KASVARDIGVPESTLRGWCKN) form a DNA-binding region, H-T-H motif. Disordered regions lie at residues 220-255 (TANNLRNSKPSVQPPLQVQSPRSDSGDRTPGLSVKN), 336-369 (SPPIRSSTPQHIIQHAQTPPLPSAPLTPSSTPSG), 443-525 (SETP…SDCI), 572-597 (NQHSNNNDISASNNNNNNSNKTDEEE), and 652-683 (EPQVTEKPNKDLLENEENTEEDSCRNKIRRRK). Over residues 227–242 (SKPSVQPPLQVQSPRS) the composition is skewed to low complexity. Composition is skewed to polar residues over residues 338–352 (PIRSSTPQHIIQHAQ) and 445–460 (TPSVRSLSSNEHNQLD). A compositionally biased stretch (acidic residues) spans 462–478 (IEGDEVTDPDLDAEIEG). Residues 575 to 591 (SNNNDISASNNNNNNSN) show a composition bias toward low complexity.

In terms of assembly, homomers. Interacts with itself, danr, ey and dac to form a complex (or complexes) containing the RD factors.

It localises to the nucleus. In terms of biological role, probable transcription factor with a role in the retinal determination (RD) network. Regulates ato expression and is required for normal R8 induction and differentiation. Danr appears to repress Dan expression, but Dan is required for Danr expression anterior to the morphogenetic furrow (MF). Dan and Danr lie downstream of so and require dac function for highest levels of expression. Contributes to differentiation of antenna-specific characteristics; effector gene that acts downstream of homothorax (hth), Distal-less (Dll), cut (ct) and spineless (ss) genes to control differentiation of distal antennal structures. This is Protein distal antenna from Drosophila pseudoobscura pseudoobscura (Fruit fly).